The chain runs to 290 residues: Nucleotide-binding protein LAR_0375 (290 aa).

13–20 contributes to the ATP binding site; the sequence is GMSGAGKT. Position 63–66 (63–66) interacts with GTP; the sequence is DMRS.

Belongs to the RapZ-like family.

In terms of biological role, displays ATPase and GTPase activities. The chain is Nucleotide-binding protein LAR_0375 from Limosilactobacillus reuteri subsp. reuteri (strain JCM 1112) (Lactobacillus reuteri).